The chain runs to 458 residues: UPF0210 protein MmarC6_1246 (458 aa).

This sequence belongs to the UPF0210 family.

In Methanococcus maripaludis (strain C6 / ATCC BAA-1332), this protein is UPF0210 protein MmarC6_1246.